The sequence spans 1009 residues: Type VII secretion system accessory factor EsaA (1009 aa).

6 consecutive transmembrane segments (helical) span residues Ile7–Val27, Ile822–Phe842, Val869–Ile889, Lys903–Leu923, Ser928–Leu948, and Ile979–Phe999.

The protein belongs to the EsaA family. Homodimer. Interacts with EssB.

The protein resides in the cell membrane. Functionally, component of the type VII secretion system (Ess). Provides together with EssB and other components such as EssC and EssE a secretion platform across the cytoplasmic membrane in the host. In Staphylococcus aureus (strain MSSA476), this protein is Type VII secretion system accessory factor EsaA.